We begin with the raw amino-acid sequence, 116 residues long: Large ribosomal subunit protein bL21c (116 aa).

It belongs to the bacterial ribosomal protein bL21 family. In terms of assembly, part of the 50S ribosomal subunit.

It localises to the plastid. Its subcellular location is the chloroplast. This protein binds to 23S rRNA. The sequence is that of Large ribosomal subunit protein bL21c from Emiliania huxleyi (Coccolithophore).